A 401-amino-acid chain; its full sequence is Acetate kinase (401 aa).

Residue Asn-7 coordinates Mg(2+). ATP is bound at residue Lys-14. Arg-91 contacts substrate. Asp-148 acts as the Proton donor/acceptor in catalysis. ATP is bound by residues 208-212 (HLGNG), 283-285 (DFR), and 332-336 (GVGEN). Position 385 (Glu-385) interacts with Mg(2+).

Belongs to the acetokinase family. As to quaternary structure, homodimer. Requires Mg(2+) as cofactor. Mn(2+) serves as cofactor.

The protein resides in the cytoplasm. The enzyme catalyses acetate + ATP = acetyl phosphate + ADP. It functions in the pathway metabolic intermediate biosynthesis; acetyl-CoA biosynthesis; acetyl-CoA from acetate: step 1/2. Catalyzes the formation of acetyl phosphate from acetate and ATP. Can also catalyze the reverse reaction. The sequence is that of Acetate kinase from Caldanaerobacter subterraneus subsp. tengcongensis (strain DSM 15242 / JCM 11007 / NBRC 100824 / MB4) (Thermoanaerobacter tengcongensis).